Here is a 185-residue protein sequence, read N- to C-terminus: Ribosome-recycling factor (185 aa).

This sequence belongs to the RRF family.

It localises to the cytoplasm. Responsible for the release of ribosomes from messenger RNA at the termination of protein biosynthesis. May increase the efficiency of translation by recycling ribosomes from one round of translation to another. This is Ribosome-recycling factor from Desulforapulum autotrophicum (strain ATCC 43914 / DSM 3382 / VKM B-1955 / HRM2) (Desulfobacterium autotrophicum).